The sequence spans 251 residues: Probable transcriptional regulatory protein Franean1_5147 (251 aa).

Belongs to the TACO1 family.

It localises to the cytoplasm. The sequence is that of Probable transcriptional regulatory protein Franean1_5147 from Parafrankia sp. (strain EAN1pec).